We begin with the raw amino-acid sequence, 74 residues long: ATP synthase subunit c (74 aa).

A run of 2 helical transmembrane segments spans residues 8 to 28 (FIGTGLMAIGMYGAALGVSNI) and 52 to 72 (IGAGLAEAMGLFSFVIAMLLI).

The protein belongs to the ATPase C chain family. In terms of assembly, F-type ATPases have 2 components, F(1) - the catalytic core - and F(0) - the membrane proton channel. F(1) has five subunits: alpha(3), beta(3), gamma(1), delta(1), epsilon(1). F(0) has three main subunits: a(1), b(2) and c(10-14). The alpha and beta chains form an alternating ring which encloses part of the gamma chain. F(1) is attached to F(0) by a central stalk formed by the gamma and epsilon chains, while a peripheral stalk is formed by the delta and b chains.

The protein localises to the cell inner membrane. Functionally, f(1)F(0) ATP synthase produces ATP from ADP in the presence of a proton or sodium gradient. F-type ATPases consist of two structural domains, F(1) containing the extramembraneous catalytic core and F(0) containing the membrane proton channel, linked together by a central stalk and a peripheral stalk. During catalysis, ATP synthesis in the catalytic domain of F(1) is coupled via a rotary mechanism of the central stalk subunits to proton translocation. Key component of the F(0) channel; it plays a direct role in translocation across the membrane. A homomeric c-ring of between 10-14 subunits forms the central stalk rotor element with the F(1) delta and epsilon subunits. The sequence is that of ATP synthase subunit c from Rickettsia conorii (strain ATCC VR-613 / Malish 7).